A 628-amino-acid chain; its full sequence is Kelch-like protein 14 (628 aa).

A BTB domain is found at 33 to 151 (CDVTLTAQGQ…LYTANVTLSL (119 aa)). Residues 69-115 (GGGVGGQDGLGAPKDQQQPPQQQPSQQQQPPPQEEPGTPSSSPDDKL) form a disordered region. Residues 84-96 (QQQPPQQQPSQQQ) are compositionally biased toward low complexity. The 70-residue stretch at 210–279 (VEDVLLLNFE…PAPELVERVQ (70 aa)) folds into the BACK domain. 6 Kelch repeats span residues 323–372 (MLLL…EVEN), 373–424 (FLFV…RLDK), 425–471 (HLYV…VHNG), 473–518 (IYIS…VMND), 520–570 (LYAI…VLDD), and 572–620 (IYLV…TVIL).

As to quaternary structure, interacts with TOR1A, preferentially with the ATP-free form.

Its subcellular location is the cytoplasm. The protein resides in the cytosol. It localises to the endoplasmic reticulum membrane. In Homo sapiens (Human), this protein is Kelch-like protein 14 (KLHL14).